The following is a 70-amino-acid chain: Small ribosomal subunit protein bS21 (70 aa).

The protein belongs to the bacterial ribosomal protein bS21 family.

This chain is Small ribosomal subunit protein bS21, found in Nautilia profundicola (strain ATCC BAA-1463 / DSM 18972 / AmH).